We begin with the raw amino-acid sequence, 384 residues long: 1-deoxy-D-xylulose 5-phosphate reductoisomerase (384 aa).

NADPH is bound by residues threonine 10, glycine 11, serine 12, isoleucine 13, glycine 36, asparagine 38, and asparagine 122. Lysine 123 provides a ligand contact to 1-deoxy-D-xylulose 5-phosphate. Glutamate 124 lines the NADPH pocket. Aspartate 148 contacts Mn(2+). Positions 149, 150, 174, and 197 each coordinate 1-deoxy-D-xylulose 5-phosphate. Glutamate 150 contacts Mn(2+). Glycine 203 contacts NADPH. 1-deoxy-D-xylulose 5-phosphate-binding residues include serine 210, asparagine 215, lysine 216, and glutamate 219. Glutamate 219 contacts Mn(2+).

It belongs to the DXR family. Requires Mg(2+) as cofactor. Mn(2+) serves as cofactor.

It carries out the reaction 2-C-methyl-D-erythritol 4-phosphate + NADP(+) = 1-deoxy-D-xylulose 5-phosphate + NADPH + H(+). Its pathway is isoprenoid biosynthesis; isopentenyl diphosphate biosynthesis via DXP pathway; isopentenyl diphosphate from 1-deoxy-D-xylulose 5-phosphate: step 1/6. Functionally, catalyzes the NADPH-dependent rearrangement and reduction of 1-deoxy-D-xylulose-5-phosphate (DXP) to 2-C-methyl-D-erythritol 4-phosphate (MEP). This chain is 1-deoxy-D-xylulose 5-phosphate reductoisomerase, found in Geotalea daltonii (strain DSM 22248 / JCM 15807 / FRC-32) (Geobacter daltonii).